We begin with the raw amino-acid sequence, 673 residues long: RAS guanyl-releasing protein 4 (673 aa).

2 stretches are compositionally biased toward basic residues: residues 1–10 (MNRKDIKRKS) and 20–32 (GRGRSRQARRHKT). Disordered regions lie at residues 1-34 (MNRKDIKRKSHQECSGKAGGRGRSRQARRHKTCP) and 164-188 (LGDASSLLSPGGPGPPPPMSSPGLG). An N-terminal Ras-GEF domain is found at 49–175 (GVLSESSCSE…DASSLLSPGG (127 aa)). Residues 164-173 (LGDASSLLSP) show a composition bias toward low complexity. The 232-residue stretch at 201 to 432 (ETEELAQHLT…YELSYAREPR (232 aa)) folds into the Ras-GEF domain. Residues 466-501 (HVEQLVESVFKNYDPEGRGSISLEDFERLSGNFPFA) enclose the EF-hand domain. The segment at 540 to 590 (LHAFQEVTFRKPTFCHSCSGFLWGVTKQGYRCRDCGLCCHRHCRDQVRVEC) adopts a Phorbol-ester/DAG-type zinc-finger fold. A disordered region spans residues 592 to 633 (KRPETKGDPGPPGAPVPATSLPPANCGSEESLSYTLSPDPES).

This sequence belongs to the RASGRP family. In terms of tissue distribution, expressed by mast cells and their progenitors (at protein level). Expressed by dendritic cells. As to expression, expressed in neutrophils.

It is found in the cytoplasm. The protein resides in the cell membrane. Functions as a cation- and diacylglycerol (DAG)-regulated nucleotide exchange factor activating Ras through the exchange of bound GDP for GTP. In neutrophils, participates in a phospholipase C-activating N-formyl peptide-activated GPCR (G protein-coupled receptor) signaling pathway by promoting Ras-mediated activation of PIK3CG/PI3Kgamma to promote neutrophil functional responses. In CD117(+) dendritic cells and mast cells, participates in an lipopolysaccharide (LPS)-activated signaling pathway that stimulates the production of interferon-gamma and other pro-inflammatory cytokines by natural killer (NK) cells. May function in mast cell differentiation. Does not appear to be required for the development of B-cells, DC-cells, T-cells, or NK-cells. In terms of biological role, binds diacylglycerol (DAG). Functionally, unable to bind diacylglycerol (DAG). The chain is RAS guanyl-releasing protein 4 (Rasgrp4) from Mus musculus (Mouse).